Here is a 519-residue protein sequence, read N- to C-terminus: Circadian clock oscillator protein KaiC (519 aa).

KaiC domains lie at 1–246 and 260–519; these read MSEK…VNIF and VRVS…GSDS. Positions 48, 49, 50, 51, 52, 53, 223, 224, 225, 227, 229, 239, 289, 290, 291, 292, 293, 294, and 295 each coordinate ATP. Position 52 (Thr-52) interacts with Mg(2+). A Mg(2+)-binding site is contributed by Thr-294. Position 317 (Glu-317) interacts with Mg(2+). Trp-330 contacts ATP. A Phosphoserine; by autocatalysis modification is found at Ser-430. The residue at position 431 (Thr-431) is a Phosphothreonine; by autocatalysis. ATP-binding residues include Arg-450, Lys-456, Met-457, Arg-458, Ser-460, His-462, and Lys-464.

The protein belongs to the KaiC family. In terms of assembly, homohexamer; hexamerization is dependent on ATP-binding. The KaiABC complex composition changes during the circadian cycle to control KaiC phosphorylation. Complexes KaiC(6), KaiA(2-4):KaiC(6), KaiB(6):KaiC(6) and KaiC(6):KaiB(6):KaiA(12) are among the most important forms, many form cooperatively. KaiC interacts with SasA, activating its autokinase function and leading to RpaA activation. It depends on Mg(2+) as a cofactor. Post-translationally, phosphorylated on serine and threonine residues by autocatalysis. Has a 4 step phosphorylation cycle; the autokinase acts first on Thr-431, then Ser-430. When Ser-430 is modified KaiC switches to an autophosphatase mode, acting first on phospho-Thr-431 then phospho-Ser-430.

The catalysed reaction is L-seryl-[protein] + ATP = O-phospho-L-seryl-[protein] + ADP + H(+). The enzyme catalyses L-threonyl-[protein] + ATP = O-phospho-L-threonyl-[protein] + ADP + H(+). It catalyses the reaction ATP + H2O = ADP + phosphate + H(+). With respect to regulation, the interaction with KaiA enhances its phosphorylation status, while the interaction with KaiB decreases it. Central component of the KaiABC oscillator complex, which constitutes the main circadian regulator in cyanobacteria. Complex composition changes during the circadian cycle to control KaiC phosphorylation. KaiA stimulates KaiC autophosphorylation, while KaiB sequesters KaiA, leading to KaiC autodephosphorylation. Clock output pathways impact the RpaA transcriptional regulator. KaiC enhances the autophosphorylation activity of SasA, which then transfers its phosphate group to RpaA to activate it. KaiB and KaiC together enhance the phospho-RpaA dephosphatase activity of CikA. In terms of biological role, has a weak, temperature-independent ATPase activity; ATPase activity defines the circadian period. The phosphorylation state of KaiC modulates its ATPase activity and effects KaiB binding. The protein is Circadian clock oscillator protein KaiC of Nostoc sp. (strain PCC 7120 / SAG 25.82 / UTEX 2576).